The following is a 401-amino-acid chain: Voltage-gated potassium channel subunit beta-3 (401 aa).

Composition is skewed to polar residues over residues 1-14 (MQVSFACTEQTLRS) and 32-41 (GVSMAQTKQR). The interval 1-49 (MQVSFACTEQTLRSRTSEDRLCPSRPSGGQNGVSMAQTKQRTPPMGAKN) is disordered. NADP(+) is bound by residues Thr90, Trp91, Gln97, and Asp119. Catalysis depends on Tyr124, which acts as the Proton donor/acceptor. NADP(+) is bound by residues Asn192, Ser222, Arg223, Gln248, Trp277, Ser278, Pro279, Leu280, Ala281, Cys282, Lys288, Arg298, Gly357, Ser359, Gln363, Glu366, and Asn367.

The protein belongs to the shaker potassium channel beta subunit family. Forms heteromultimeric complex with alpha subunits. Identified in potassium channel complexes containing KCNA1 and KCNA2.

The protein localises to the cytoplasm. Functionally, regulatory subunit of the voltage-gated potassium (Kv) channels composed of pore-forming and potassium-conducting alpha subunits and of regulatory beta subunit. The beta-3/KCNAB3 subunit may mediate closure of potassium channels. Increases and accelerates inactivation of Kv1.1/KCNA1 and Kv2.2/KCNA2 subunit-containing channels. May display nicotinamide adenine dinucleotide phosphate (NADPH)-dependent aldoketoreductase activity. The binding of oxidized and reduced NADP(H) cofactors may be required for the regulation of potassium channel activity. The protein is Voltage-gated potassium channel subunit beta-3 (kcnab3) of Xenopus laevis (African clawed frog).